A 303-amino-acid chain; its full sequence is 1D-myo-inositol 2-acetamido-2-deoxy-alpha-D-glucopyranoside deacetylase 1 (303 aa).

3 residues coordinate Zn(2+): His15, Asp18, and His157.

This sequence belongs to the MshB deacetylase family. Requires Zn(2+) as cofactor.

It catalyses the reaction 1D-myo-inositol 2-acetamido-2-deoxy-alpha-D-glucopyranoside + H2O = 1D-myo-inositol 2-amino-2-deoxy-alpha-D-glucopyranoside + acetate. In terms of biological role, catalyzes the deacetylation of 1D-myo-inositol 2-acetamido-2-deoxy-alpha-D-glucopyranoside (GlcNAc-Ins) in the mycothiol biosynthesis pathway. The protein is 1D-myo-inositol 2-acetamido-2-deoxy-alpha-D-glucopyranoside deacetylase 1 of Saccharopolyspora erythraea (strain ATCC 11635 / DSM 40517 / JCM 4748 / NBRC 13426 / NCIMB 8594 / NRRL 2338).